Consider the following 572-residue polypeptide: Fatty acid amide hydrolase 1 (572 aa).

An N-terminal signal peptide occupies residues methionine 1–alanine 14. The stretch at isoleucine 32–isoleucine 63 forms a coiled coil. Residues lysine 139 and serine 214 each act as charge relay system in the active site. Substrate-binding positions include serine 214 and valine 235–serine 238. Residue serine 238 is the Acyl-ester intermediate of the active site.

The protein belongs to the amidase family. In terms of tissue distribution, expressed in the pharynx, some pharyngeal neurons, the posterior intestine and anal depressor muscles.

It catalyses the reaction N-(5Z,8Z,11Z,14Z-eicosatetraenoyl)-ethanolamine + H2O = ethanolamine + (5Z,8Z,11Z,14Z)-eicosatetraenoate. The enzyme catalyses (9Z)-octadecenamide + H2O = (9Z)-octadecenoate + NH4(+). The catalysed reaction is (5Z,8Z,11Z,14Z,17Z-eicosapentaenoyl) ethanolamine + H2O = (5Z,8Z,11Z,14Z,17Z)-eicosapentaenoate + ethanolamine. It carries out the reaction N-(9Z-hexadecenoyl) ethanolamine + H2O = (9Z)-hexadecenoate + ethanolamine. It catalyses the reaction N-(9Z-octadecenoyl) ethanolamine + H2O = ethanolamine + (9Z)-octadecenoate. The enzyme catalyses N-octadecanoyl ethanolamine + H2O = octadecanoate + ethanolamine. The catalysed reaction is N-docosanoyl-ethanolamine + H2O = docosanoate + ethanolamine. It carries out the reaction N-(15Z-tetracosenoyl)-ethanolamine + H2O = (15Z)-tetracosenoate + ethanolamine. It catalyses the reaction N-hexadecanoylethanolamine + H2O = ethanolamine + hexadecanoate. The enzyme catalyses N-(9Z,12Z-octadecadienoyl)-ethanolamine + H2O = ethanolamine + (9Z,12Z)-octadecadienoate. The catalysed reaction is (9Z)-octadecenoate + glycine = N-(9Z-octadecenoyl)glycine + H2O. It carries out the reaction N-(5Z,8Z,11Z,14Z)-eicosatetraenoyl-glycine + H2O = (5Z,8Z,11Z,14Z)-eicosatetraenoate + glycine. It catalyses the reaction N-(5Z,8Z,11Z,14Z-eicosatetraenoyl)-L-serine + H2O = (5Z,8Z,11Z,14Z)-eicosatetraenoate + L-serine. Functionally, catalyzes the hydrolysis of endogenous amidated lipids like anandamide (AEA or N-(5Z,8Z,11Z,14Z-eicosatetraenoyl)-ethanolamine) and eicosapentaneoyl ethanolamide (EPEA or (5Z,8Z,11Z,14Z,17Z-eicosapentaenoyl) ethanolamine), as well as other fatty amides, to their corresponding fatty acids, thereby regulating the signaling functions of these molecules. EPEA promotes dauer formation and may constitute a signal of high nutrient availability. Breakdown of EPEA may promote lifespan extension when nutrient availability is high. Facilitates axon regeneration after injury by degradating inhibitory compounds such as AEA. FAAH cooperates with PM20D1 in the hydrolysis of amino acid-conjugated fatty acids such as N-fatty acyl glycine and N-fatty acyl-L-serine, thereby acting as a physiological regulator of specific subsets of intracellular, but not of extracellular, N-fatty acyl amino acids. The sequence is that of Fatty acid amide hydrolase 1 from Caenorhabditis elegans.